A 512-amino-acid polypeptide reads, in one-letter code: Retinaldehyde dehydrogenase 3 (512 aa).

Positions 1-23 (MATANGAVENGQPDGKPPALPRP) are disordered. A2 carries the N-acetylalanine modification. Residues K204, E207, and 257–262 (GSTEVG) each bind NAD(+). E280 (proton acceptor) is an active-site residue. C314 serves as the catalytic Nucleophile. 2 residues coordinate NAD(+): Q361 and E411.

Belongs to the aldehyde dehydrogenase family. In terms of assembly, homotetramer.

It is found in the cytoplasm. It carries out the reaction all-trans-retinal + NAD(+) + H2O = all-trans-retinoate + NADH + 2 H(+). It catalyses the reaction retinal + NAD(+) + H2O = retinoate + NADH + 2 H(+). The catalysed reaction is all-trans-13,14-dihydroretinal + NAD(+) + H2O = all-trans-13,14-dihydroretinoate + NADH + 2 H(+). The protein operates within cofactor metabolism; retinol metabolism. Catalyzes the NAD-dependent oxidation of aldehyde substrates, such as all-trans-retinal and all-trans-13,14-dihydroretinal, to their corresponding carboxylic acids, all-trans-retinoate and all-trans-13,14-dihydroretinoate, respectively. High specificity for all-trans-retinal as substrate, can also accept acetaldehyde as substrate in vitro but with lower affinity. Required for the biosynthesis of normal levels of retinoate in the embryonic ocular and nasal regions; a critical lipid in the embryonic development of the eye and the nasal region. The chain is Retinaldehyde dehydrogenase 3 (Aldh1a3) from Rattus norvegicus (Rat).